We begin with the raw amino-acid sequence, 159 residues long: Glucosamine 6-phosphate N-acetyltransferase (159 aa).

S2 carries the post-translational modification N-acetylserine. D-glucosamine 6-phosphate contacts are provided by residues T28, 86–89, and 98–100; these read KIIH and EDI. The 132-residue stretch at 28–159 folds into the N-acetyltransferase domain; that stretch reads TTVGTITPES…NAGVEMQIRK (132 aa). Residues 100-102 and 108-113 each bind acetyl-CoA; these read IAV and GQGLGK. Residues 129 to 130 and D134 each bind D-glucosamine 6-phosphate; that span reads YK. 143–145 lines the acetyl-CoA pocket; the sequence is YEK. R158 is a D-glucosamine 6-phosphate binding site.

This sequence belongs to the acetyltransferase family. GNA1 subfamily. Homodimer.

It carries out the reaction D-glucosamine 6-phosphate + acetyl-CoA = N-acetyl-D-glucosamine 6-phosphate + CoA + H(+). It participates in nucleotide-sugar biosynthesis; UDP-N-acetyl-alpha-D-glucosamine biosynthesis; N-acetyl-alpha-D-glucosamine 1-phosphate from alpha-D-glucosamine 6-phosphate (route I): step 1/2. This chain is Glucosamine 6-phosphate N-acetyltransferase (GNA1), found in Saccharomyces cerevisiae (strain ATCC 204508 / S288c) (Baker's yeast).